The sequence spans 418 residues: Light-independent protochlorophyllide reductase subunit N (418 aa).

The [4Fe-4S] cluster site is built by Cys17, Cys42, and Cys103.

It belongs to the BchN/ChlN family. In terms of assembly, protochlorophyllide reductase is composed of three subunits; ChlL, ChlN and ChlB. Forms a heterotetramer of two ChlB and two ChlN subunits. The cofactor is [4Fe-4S] cluster.

It carries out the reaction chlorophyllide a + oxidized 2[4Fe-4S]-[ferredoxin] + 2 ADP + 2 phosphate = protochlorophyllide a + reduced 2[4Fe-4S]-[ferredoxin] + 2 ATP + 2 H2O. The protein operates within porphyrin-containing compound metabolism; chlorophyll biosynthesis (light-independent). Component of the dark-operative protochlorophyllide reductase (DPOR) that uses Mg-ATP and reduced ferredoxin to reduce ring D of protochlorophyllide (Pchlide) to form chlorophyllide a (Chlide). This reaction is light-independent. The NB-protein (ChlN-ChlB) is the catalytic component of the complex. In Prochlorococcus marinus (strain MIT 9215), this protein is Light-independent protochlorophyllide reductase subunit N.